A 243-amino-acid chain; its full sequence is Type III pantothenate kinase (243 aa).

Residue Asp7–Lys14 coordinates ATP. Residues Tyr91 and Gly98 to Arg101 each bind substrate. The active-site Proton acceptor is the Asp100. Thr122 is an ATP binding site. Position 172 (Thr172) interacts with substrate.

The protein belongs to the type III pantothenate kinase family. Homodimer. NH4(+) is required as a cofactor. It depends on K(+) as a cofactor.

It is found in the cytoplasm. It carries out the reaction (R)-pantothenate + ATP = (R)-4'-phosphopantothenate + ADP + H(+). It participates in cofactor biosynthesis; coenzyme A biosynthesis; CoA from (R)-pantothenate: step 1/5. Catalyzes the phosphorylation of pantothenate (Pan), the first step in CoA biosynthesis. This chain is Type III pantothenate kinase, found in Stenotrophomonas maltophilia (strain R551-3).